Reading from the N-terminus, the 360-residue chain is Phospho-N-acetylmuramoyl-pentapeptide-transferase (360 aa).

Residues 1-25 (MLVWLAEHLVKYYSGFNVFSYLTFR) lie on the Periplasmic side of the membrane. The chain crosses the membrane as a helical span at residues 26–46 (AIVSLLTALFISLWMGPRMIA). Over 47-71 (RLQKLSFGQVVRNDGPESHFSKRGT) the chain is Cytoplasmic. Residues 72 to 92 (PTMGGIMILTSIVISVLLWAY) form a helical membrane-spanning segment. Pro93 is a topological domain (periplasmic). The chain crosses the membrane as a helical span at residues 94–114 (SNPYVWCVLVVLIGYGIIGFV). The Cytoplasmic segment spans residues 115–131 (DDYRKVVRKDTKGLIAR). The chain crosses the membrane as a helical span at residues 132-152 (WKYFWMSVIALGVAFALYLVG). Residues 153 to 167 (KDTPATQLVVPFFKD) are Periplasmic-facing. Residues 168 to 188 (VMPQLGLFYILLSYFVIVGTG) form a helical membrane-spanning segment. Residues 189–198 (NAVNLTDGLD) are Cytoplasmic-facing. The helical transmembrane segment at 199–219 (GLAIMPTVFVAAGFALVAWAT) threads the bilayer. Residues 220–235 (GNMNFANYLHIPYLRH) are Periplasmic-facing. The chain crosses the membrane as a helical span at residues 236–256 (AGELVIVCTAIVGAGLGFLWF). The Cytoplasmic portion of the chain corresponds to 257 to 262 (NTYPAQ). Residues 263 to 283 (VFMGDVGSLALGGALGIIAVL) traverse the membrane as a helical segment. At 284 to 287 (LRQE) the chain is on the periplasmic side. A helical transmembrane segment spans residues 288 to 308 (FLLVIMGGVFVVETLSVILQV). Residues 309–337 (GSFKLRGQRIFRMAPIHHHYELKGWPEPR) are Cytoplasmic-facing. The helical transmembrane segment at 338 to 358 (VIVRFWIISLMLVLIGLATLK) threads the bilayer. The Periplasmic portion of the chain corresponds to 359-360 (VR).

This sequence belongs to the glycosyltransferase 4 family. MraY subfamily. Mg(2+) serves as cofactor.

It is found in the cell inner membrane. The catalysed reaction is UDP-N-acetyl-alpha-D-muramoyl-L-alanyl-gamma-D-glutamyl-meso-2,6-diaminopimeloyl-D-alanyl-D-alanine + di-trans,octa-cis-undecaprenyl phosphate = di-trans,octa-cis-undecaprenyl diphospho-N-acetyl-alpha-D-muramoyl-L-alanyl-D-glutamyl-meso-2,6-diaminopimeloyl-D-alanyl-D-alanine + UMP. It functions in the pathway cell wall biogenesis; peptidoglycan biosynthesis. Functionally, catalyzes the initial step of the lipid cycle reactions in the biosynthesis of the cell wall peptidoglycan: transfers peptidoglycan precursor phospho-MurNAc-pentapeptide from UDP-MurNAc-pentapeptide onto the lipid carrier undecaprenyl phosphate, yielding undecaprenyl-pyrophosphoryl-MurNAc-pentapeptide, known as lipid I. This chain is Phospho-N-acetylmuramoyl-pentapeptide-transferase, found in Salmonella gallinarum (strain 287/91 / NCTC 13346).